A 186-amino-acid polypeptide reads, in one-letter code: Methylamine dehydrogenase light chain (186 aa).

Positions 1-57 form a signal peptide, tat-type signal; that stretch reads MLGKSQFDDLFEKMSRKVAGHTSRRGFIGRVGTAVAGVALVPLLPVDRRGRVSRANA. 6 disulfide bridges follow: Cys-78–Cys-143, Cys-84–Cys-116, Cys-91–Cys-176, Cys-93–Cys-141, Cys-101–Cys-132, and Cys-133–Cys-164. Trp-112 carries the tryptophylquinone modification. The segment at residues 112-163 is a cross-link (tryptophan tryptophylquinone (Trp-Trp)); sequence WVASCYNPTDKQSYLISYRDCCGANVSGRCACLNTEGELPVYRPEFGNDIIW.

Belongs to the aromatic amine dehydrogenase light chain family. In terms of assembly, heterotetramer of two light and two heavy chains. Tryptophan tryptophylquinone residue is required as a cofactor. In terms of processing, predicted to be exported by the Tat system. The position of the signal peptide cleavage has been experimentally proven. Post-translationally, tryptophan tryptophylquinone (TTQ) is formed by oxidation of the indole ring of a tryptophan to form tryptophylquinone followed by covalent cross-linking with another tryptophan residue.

Its subcellular location is the periplasm. It carries out the reaction 2 oxidized [amicyanin] + methylamine + H2O = 2 reduced [amicyanin] + formaldehyde + NH4(+) + 2 H(+). It participates in one-carbon metabolism; methylamine degradation; formaldehyde from methylamine: step 1/1. In terms of biological role, methylamine dehydrogenase carries out the oxidation of methylamine. Electrons are passed from methylamine dehydrogenase to amicyanin. In Methylorubrum extorquens (strain ATCC 14718 / DSM 1338 / JCM 2805 / NCIMB 9133 / AM1) (Methylobacterium extorquens), this protein is Methylamine dehydrogenase light chain (mauA).